We begin with the raw amino-acid sequence, 305 residues long: MQHPREENSIVVELEPALATFIKQGFNNLVKWPLLNIGVVLYNTSTAVNEEWLTAVEHIPTMKIFYKHIHKILTREMGFLVYLKRSQSEHDNYITLYDFDYYIIDKDTNSVTMVDKPTELKETLLHVFQEYRLKSSQTIELIAFSSGTVINEDIVSKLTFLDVEVFNREYNNVKTIIDPDFVSRSPFIVISPMGKLTFFVEVYSWFDFKSCFKDIIDFLEGTLIANIHNHMIKVGDCDETVSSYNPESGMLFVNDLMTMNIVNFFGCNSRLESYHRFDMTKVDVELFIKALSDACKKILSASNRL.

Belongs to the poxviridae DNA-directed RNA polymerase 35 kDa subunit family. The DNA-dependent RNA polymerase used for intermediate and late genes expression consists of eight subunits 147 kDa, 133 kDa, 35 kDa, 30 kDa, 22 kDa, 19 kDa, 18 kDa and 7 kDa totalling more than 500 kDa in mass. The same holoenzyme, with the addition of the transcription-specificity factor RAP94, is used for early gene expression.

It is found in the virion. It carries out the reaction RNA(n) + a ribonucleoside 5'-triphosphate = RNA(n+1) + diphosphate. In terms of biological role, part of the DNA-dependent RNA polymerase which catalyzes the transcription of viral DNA into RNA using the four ribonucleoside triphosphates as substrates. Responsible for the transcription of early, intermediate and late genes. DNA-dependent RNA polymerase associates with the early transcription factor (ETF), itself composed of D6 and A7, thereby allowing the early genes transcription. Late transcription, and probably also intermediate transcription, require newly synthesized RNA polymerase. The protein is DNA-directed RNA polymerase 35 kDa subunit (OPG156) of Cynomys gunnisoni (Gunnison's prairie dog).